The following is a 461-amino-acid chain: ATP synthase subunit beta (461 aa).

Residue 151-158 coordinates ATP; that stretch reads GGAGVGKT.

This sequence belongs to the ATPase alpha/beta chains family. As to quaternary structure, F-type ATPases have 2 components, CF(1) - the catalytic core - and CF(0) - the membrane proton channel. CF(1) has five subunits: alpha(3), beta(3), gamma(1), delta(1), epsilon(1). CF(0) has three main subunits: a(1), b(2) and c(9-12). The alpha and beta chains form an alternating ring which encloses part of the gamma chain. CF(1) is attached to CF(0) by a central stalk formed by the gamma and epsilon chains, while a peripheral stalk is formed by the delta and b chains.

The protein localises to the cell inner membrane. The enzyme catalyses ATP + H2O + 4 H(+)(in) = ADP + phosphate + 5 H(+)(out). Functionally, produces ATP from ADP in the presence of a proton gradient across the membrane. The catalytic sites are hosted primarily by the beta subunits. In Coxiella burnetii (strain Dugway 5J108-111), this protein is ATP synthase subunit beta.